A 152-amino-acid polypeptide reads, in one-letter code: Small ribosomal subunit protein uS8m (152 aa).

This sequence belongs to the universal ribosomal protein uS8 family.

It is found in the mitochondrion. The polypeptide is Small ribosomal subunit protein uS8m (mrps8) (Dictyostelium citrinum (Slime mold)).